The following is a 349-amino-acid chain: Delta(7)-sterol 5(6)-desaturase ERG3A (349 aa).

A run of 3 helical transmembrane segments spans residues 84–104 (ITWI…YIFI), 124–144 (IIAA…FFLL), and 162–182 (LWYD…CIYW). A Fatty acid hydroxylase domain is found at 170 to 296 (PLFLLFTDFC…FTAFDRMGGT (127 aa)). Residues 184–188 (HRWLH) carry the Histidine box-1 motif. Residues 197 to 201 (HKLHH) carry the Histidine box-2 motif. A helical membrane pass occupies residues 227–247 (HIFPFIFPLQKMAYVALFVFV). The short motif at 272–276 (HSLHH) is the Histidine box-3 element.

This sequence belongs to the sterol desaturase family.

It localises to the endoplasmic reticulum membrane. The enzyme catalyses episterol + 2 Fe(II)-[cytochrome b5] + O2 + 2 H(+) = 5-dehydroepisterol + 2 Fe(III)-[cytochrome b5] + 2 H2O. Its pathway is steroid metabolism; ergosterol biosynthesis. Its function is as follows. C-5 sterol desaturase; part of the third module of ergosterol biosynthesis pathway that includes the late steps of the pathway. ERG3A and ERG3BB catalyze the introduction of a C-5 double bond in the B ring to produce 5-dehydroepisterol. The third module or late pathway involves the ergosterol synthesis itself through consecutive reactions that mainly occur in the endoplasmic reticulum (ER) membrane. Firstly, the squalene synthase ERG9 catalyzes the condensation of 2 farnesyl pyrophosphate moieties to form squalene, which is the precursor of all steroids. Squalene synthase is crucial for balancing the incorporation of farnesyl diphosphate (FPP) into sterol and nonsterol isoprene synthesis. Secondly, squalene is converted into lanosterol by the consecutive action of the squalene epoxidase ERG1 and the lanosterol synthase ERG7. Then, the delta(24)-sterol C-methyltransferase ERG6 methylates lanosterol at C-24 to produce eburicol. Eburicol is the substrate of the sterol 14-alpha demethylase encoded by CYP51A, CYP51B and CYP51C, to yield 4,4,24-trimethyl ergosta-8,14,24(28)-trienol. CYP51B encodes the enzyme primarily responsible for sterol 14-alpha-demethylation, and plays an essential role in ascospore formation. CYP51A encodes an additional sterol 14-alpha-demethylase, induced on ergosterol depletion and responsible for the intrinsic variation in azole sensitivity. The third CYP51 isoform, CYP51C, does not encode a sterol 14-alpha-demethylase, but is required for full virulence on host wheat ears. The C-14 reductase ERG24 then reduces the C14=C15 double bond which leads to 4,4-dimethylfecosterol. A sequence of further demethylations at C-4, involving the C-4 demethylation complex containing the C-4 methylsterol oxidases ERG25, the sterol-4-alpha-carboxylate 3-dehydrogenase ERG26 and the 3-keto-steroid reductase ERG27, leads to the production of fecosterol via 4-methylfecosterol. ERG28 has a role as a scaffold to help anchor ERG25, ERG26 and ERG27 to the endoplasmic reticulum. The C-8 sterol isomerase ERG2 then catalyzes the reaction which results in unsaturation at C-7 in the B ring of sterols and thus converts fecosterol to episterol. The sterol-C5-desaturases ERG3A and ERG3BB then catalyze the introduction of a C-5 double bond in the B ring to produce 5-dehydroepisterol. The C-22 sterol desaturases ERG5A and ERG5B further convert 5-dehydroepisterol into ergosta-5,7,22,24(28)-tetraen-3beta-ol by forming the C-22(23) double bond in the sterol side chain. Finally, ergosta-5,7,22,24(28)-tetraen-3beta-ol is substrate of the C-24(28) sterol reductase ERG4 to produce ergosterol. The polypeptide is Delta(7)-sterol 5(6)-desaturase ERG3A (Gibberella zeae (strain ATCC MYA-4620 / CBS 123657 / FGSC 9075 / NRRL 31084 / PH-1) (Wheat head blight fungus)).